The sequence spans 455 residues: MERIERDTLGEISVDATKYWGAQTERSKRNFAIGDNPMPIEIIYAFAQLKKATAKVNAAEGKLSEEKAIAIGQVCDQIIQGELDEHFPLVVWQTGSGTQSNMNVNEVIAHVANLTLGEGQIHPNDDVNMSQSSNDTFPTAMHIAAYGALVTKLLPEITKMEAVLAEKKSKYMHLVKIGRTHLQDATPLTLGQEISGWEACLTNNKNYLETSMKAILPLAIGGTAVGTGLNASRDFGDKVAEELMKQTGYPFTSDSNKYFALTSHSPINFVHGSIRSLASDLMKIANDIRLLASGPRSGIGELTIPVNEPGSSIMPGKVNPTQCEAMTMVAAQVMGNDVTINVAASQGNFELNVYKPVIIFNFLESVKLLSDSMRSFRLHCLEGLTANEKVIETKVNDSLMLVTALNPHIGYEKAAKIAKLAFDENTTLKEAAIKTGFVTEKQFDLWIDPLKMTNL.

Residues 96 to 98 (SGT), 122 to 125 (HPND), 132 to 134 (SSN), and T180 contribute to the substrate site. Residue H181 is the Proton donor/acceptor of the active site. The active site involves S311. Substrate is bound by residues S312 and 317 to 319 (KVN).

The protein belongs to the class-II fumarase/aspartase family. Fumarase subfamily. As to quaternary structure, homotetramer.

The protein resides in the cytoplasm. The enzyme catalyses (S)-malate = fumarate + H2O. It functions in the pathway carbohydrate metabolism; tricarboxylic acid cycle; (S)-malate from fumarate: step 1/1. Involved in the TCA cycle. Catalyzes the stereospecific interconversion of fumarate to L-malate. This chain is Fumarate hydratase class II, found in Listeria monocytogenes serotype 4b (strain F2365).